The primary structure comprises 78 residues: MANIKSAIKRAELNVKQNEKNSAQKSAMRTAIKAFEANPSEELFRAASSAIDKAETKGLIHKNKASRDKARLSTKLAK.

It belongs to the bacterial ribosomal protein bS20 family.

Functionally, binds directly to 16S ribosomal RNA. This Streptococcus pneumoniae serotype 19F (strain G54) protein is Small ribosomal subunit protein bS20.